The primary structure comprises 152 residues: Transcription factor ATOH7 (152 aa).

Residues 40–92 form the bHLH domain; the sequence is RRRLAANARERRRMQGLNTAFDRLRRVVPQWGQDKKLSKYETLQMALSYIMAL.

As to quaternary structure, forms a heterodimer with TCF3 isoform E47; interaction may be required for DNA-binding in certain situations.

It localises to the nucleus. The protein localises to the perikaryon. Its subcellular location is the cell projection. The protein resides in the axon. Functionally, transcription factor that binds to DNA at the consensus sequence 5'-CAG[GC]TG-3'. Dimerization with TCF3 isoform E47 may be required in certain situations. Binds to gene promoters and enhancer elements, and thereby regulates a transcriptional program of retinal ganglion cell (RGC) determinant genes. Although the exact mechanism is not certain, retinal transcription regulation by ATOH7 has a role in RGC determination and survival, photoreceptor population development, targeting of RGC axons to the optic nerve and development of the retino-hypothalamic tract. Binds to its own promoter and enhancer sequences, suggesting autoregulation of ATOH7 transcription. Required for retinal circadian rhythm photoentrainment. Plays a role in brainstem auditory signaling and binaural processing. The chain is Transcription factor ATOH7 from Homo sapiens (Human).